We begin with the raw amino-acid sequence, 251 residues long: Hydroxyacylglutathione hydrolase (251 aa).

Zn(2+) contacts are provided by histidine 53, histidine 55, aspartate 57, histidine 58, histidine 110, aspartate 127, and histidine 165.

This sequence belongs to the metallo-beta-lactamase superfamily. Glyoxalase II family. Monomer. Requires Zn(2+) as cofactor.

It catalyses the reaction an S-(2-hydroxyacyl)glutathione + H2O = a 2-hydroxy carboxylate + glutathione + H(+). Its pathway is secondary metabolite metabolism; methylglyoxal degradation; (R)-lactate from methylglyoxal: step 2/2. Functionally, thiolesterase that catalyzes the hydrolysis of S-D-lactoyl-glutathione to form glutathione and D-lactic acid. The protein is Hydroxyacylglutathione hydrolase of Citrobacter koseri (strain ATCC BAA-895 / CDC 4225-83 / SGSC4696).